The primary structure comprises 152 residues: Regulatory protein RecX (152 aa).

It belongs to the RecX family.

It localises to the cytoplasm. Modulates RecA activity. The chain is Regulatory protein RecX from Chromohalobacter salexigens (strain ATCC BAA-138 / DSM 3043 / CIP 106854 / NCIMB 13768 / 1H11).